The sequence spans 411 residues: Translation initiation factor 2 subunit gamma (411 aa).

In terms of domain architecture, tr-type G spans 9–201; sequence QPTVNIGMVG…AIEKYIPTPE (193 aa). The interval 18–25 is G1; sequence GHVDHGKS. Mg(2+)-binding residues include Asp21, Ser25, Gly46, and Ser48. Position 21–26 (21–26) interacts with GTP; sequence DHGKST. The G2 stretch occupies residues 46–50; that stretch reads GISIK. The G3 stretch occupies residues 88 to 91; it reads DAPG. GTP contacts are provided by residues 144–147 and 179–181; these read NKID and SAY. Positions 144–147 are G4; it reads NKID. The tract at residues 179–181 is G5; the sequence is SAY.

It belongs to the TRAFAC class translation factor GTPase superfamily. Classic translation factor GTPase family. EIF2G subfamily. As to quaternary structure, heterotrimer composed of an alpha, a beta and a gamma chain. Requires Mg(2+) as cofactor.

It catalyses the reaction GTP + H2O = GDP + phosphate + H(+). EIF-2 functions in the early steps of protein synthesis by forming a ternary complex with GTP and initiator tRNA. The protein is Translation initiation factor 2 subunit gamma of Thermoplasma volcanium (strain ATCC 51530 / DSM 4299 / JCM 9571 / NBRC 15438 / GSS1).